Reading from the N-terminus, the 275-residue chain is Large ribosomal subunit protein uL2c (275 aa).

Disordered stretches follow at residues 1 to 28 and 227 to 251; these read MGIR…TKSK and PCDH…TPWG. Positions 10 to 22 are enriched in polar residues; the sequence is TPGTRNRSSSDFS.

Belongs to the universal ribosomal protein uL2 family. In terms of assembly, part of the 50S ribosomal subunit.

The protein resides in the plastid. It is found in the chloroplast. The sequence is that of Large ribosomal subunit protein uL2c (rpl2) from Rhodomonas salina (Cryptomonas salina).